Consider the following 598-residue polypeptide: Torsin-1A-interacting protein 1 (598 aa).

Topologically, residues 1–351 (MAGEGRRAEA…PQNASFVKRN (351 aa)) are nuclear. 2 disordered regions span residues 19–254 (VTPR…RSSS) and 267–314 (QNFT…IYGS). Ser-60 carries the post-translational modification Phosphoserine. Basic and acidic residues-rich tracts occupy residues 73 to 101 (LVDK…EVRE) and 115 to 124 (RPQEAEEMKT). Ser-135, Ser-143, Ser-154, Ser-156, Ser-157, and Ser-187 each carry phosphoserine. Polar residues predominate over residues 205-214 (EATSVQQKVN). Residue Ser-216 is modified to Phosphoserine. A Phosphothreonine modification is found at Thr-221. A phosphoserine mark is found at Ser-227, Ser-230, and Ser-242. The span at 238–250 (RSRDSDESGDKTT) shows a compositional bias: basic and acidic residues. Polar residues-rich tracts occupy residues 277–287 (SVLSSGYQKTP) and 300–313 (RMQT…SIYG). Position 320 is a phosphoserine (Ser-320). The tract at residues 322-341 (LKSELGNQSPSTSSQQVTGQ) is disordered. A Glycyl lysine isopeptide (Lys-Gly) (interchain with G-Cter in SUMO2) cross-link involves residue Lys-323. The span at 326-341 (LGNQSPSTSSQQVTGQ) shows a compositional bias: polar residues. The residue at position 330 (Ser-330) is a Phosphoserine. Residues 352-372 (WWWLLPLIAALASGSFWFFST) form a helical membrane-spanning segment. The interaction with TOR1A stretch occupies residues 371–598 (STPEVETTAV…ENALKRGICL (228 aa)). At 373–598 (PEVETTAVQE…ENALKRGICL (226 aa)) the chain is on the perinuclear space side. Residues 374–450 (EVETTAVQEF…SEQIADAYSS (77 aa)) are a coiled coil. Asn-414 carries N-linked (GlcNAc...) asparagine glycosylation.

This sequence belongs to the TOR1AIP family. As to quaternary structure, interacts with ATP1B4. Interacts with TOR1A (ATP-bound). Interacts with TOR1B, TOR2A and TOR3A.

It is found in the nucleus inner membrane. Its function is as follows. Required for nuclear membrane integrity. Induces TOR1A and TOR1B ATPase activity and is required for their location on the nuclear membrane. Binds to A- and B-type lamins. Possible role in membrane attachment and assembly of the nuclear lamina. The polypeptide is Torsin-1A-interacting protein 1 (TOR1AIP1) (Pongo abelii (Sumatran orangutan)).